The following is a 403-amino-acid chain: RNA-binding motif, single-stranded-interacting protein 1 (403 aa).

The segment at 30 to 56 is disordered; the sequence is PAHPMAPPSPSTTSSNNNSSSSSNSGW. A compositionally biased stretch (low complexity) spans 40 to 54; it reads STTSSNNNSSSSSNS. RRM domains lie at 62–135 and 141–226; these read TNLY…MAKQ and TNLY…FADG. At Thr208 the chain carries Phosphothreonine.

The protein localises to the nucleus. Single-stranded DNA binding protein that interacts with the region upstream of the C-myc gene. Binds specifically to the DNA sequence motif 5'-[AT]CT[AT][AT]T-3'. Probably has a role in DNA replication. This Bos taurus (Bovine) protein is RNA-binding motif, single-stranded-interacting protein 1 (RBMS1).